A 418-amino-acid polypeptide reads, in one-letter code: UDP-N-acetylglucosamine 1-carboxyvinyltransferase (418 aa).

22-23 is a binding site for phosphoenolpyruvate; it reads KN. Residue R92 participates in UDP-N-acetyl-alpha-D-glucosamine binding. Catalysis depends on C116, which acts as the Proton donor. C116 is modified (2-(S-cysteinyl)pyruvic acid O-phosphothioketal). Positions 306 and 328 each coordinate UDP-N-acetyl-alpha-D-glucosamine.

The protein belongs to the EPSP synthase family. MurA subfamily.

It localises to the cytoplasm. It catalyses the reaction phosphoenolpyruvate + UDP-N-acetyl-alpha-D-glucosamine = UDP-N-acetyl-3-O-(1-carboxyvinyl)-alpha-D-glucosamine + phosphate. It functions in the pathway cell wall biogenesis; peptidoglycan biosynthesis. Functionally, cell wall formation. Adds enolpyruvyl to UDP-N-acetylglucosamine. This Shewanella amazonensis (strain ATCC BAA-1098 / SB2B) protein is UDP-N-acetylglucosamine 1-carboxyvinyltransferase.